The sequence spans 468 residues: Ribulose bisphosphate carboxylase large chain (468 aa).

Position 7 is an N6,N6,N6-trimethyllysine (K7). The substrate site is built by N116 and T166. The active-site Proton acceptor is K168. K170 provides a ligand contact to substrate. Mg(2+) contacts are provided by K194, D196, and E197. An N6-carboxylysine modification is found at K194. Catalysis depends on H287, which acts as the Proton acceptor. R288, H320, and S372 together coordinate substrate.

Belongs to the RuBisCO large chain family. Type I subfamily. As to quaternary structure, heterohexadecamer of 8 large chains and 8 small chains; disulfide-linked. The disulfide link is formed within the large subunit homodimers. Mg(2+) is required as a cofactor. Post-translationally, the disulfide bond which can form in the large chain dimeric partners within the hexadecamer appears to be associated with oxidative stress and protein turnover.

It is found in the plastid. The protein localises to the chloroplast. It carries out the reaction 2 (2R)-3-phosphoglycerate + 2 H(+) = D-ribulose 1,5-bisphosphate + CO2 + H2O. It catalyses the reaction D-ribulose 1,5-bisphosphate + O2 = 2-phosphoglycolate + (2R)-3-phosphoglycerate + 2 H(+). Its function is as follows. RuBisCO catalyzes two reactions: the carboxylation of D-ribulose 1,5-bisphosphate, the primary event in carbon dioxide fixation, as well as the oxidative fragmentation of the pentose substrate in the photorespiration process. Both reactions occur simultaneously and in competition at the same active site. This is Ribulose bisphosphate carboxylase large chain from Cornus alternifolia (Pagoda dogwood).